We begin with the raw amino-acid sequence, 921 residues long: Isoleucine--tRNA ligase 1 (921 aa).

Positions 57–67 match the 'HIGH' region motif; sequence PYANGDIHMGH. Glu552 is a binding site for L-isoleucyl-5'-AMP. Positions 593-597 match the 'KMSKS' region motif; sequence KMSKS. Residue Lys596 participates in ATP binding. Zn(2+)-binding residues include Cys888, Cys891, Cys908, and Cys911.

It belongs to the class-I aminoacyl-tRNA synthetase family. IleS type 1 subfamily. In terms of assembly, monomer. Zn(2+) is required as a cofactor.

The protein resides in the cytoplasm. The catalysed reaction is tRNA(Ile) + L-isoleucine + ATP = L-isoleucyl-tRNA(Ile) + AMP + diphosphate. Functionally, catalyzes the attachment of isoleucine to tRNA(Ile). As IleRS can inadvertently accommodate and process structurally similar amino acids such as valine, to avoid such errors it has two additional distinct tRNA(Ile)-dependent editing activities. One activity is designated as 'pretransfer' editing and involves the hydrolysis of activated Val-AMP. The other activity is designated 'posttransfer' editing and involves deacylation of mischarged Val-tRNA(Ile). In Bacillus cereus (strain ZK / E33L), this protein is Isoleucine--tRNA ligase 1.